Here is a 476-residue protein sequence, read N- to C-terminus: Aspartyl/glutamyl-tRNA(Asn/Gln) amidotransferase subunit B (476 aa).

This sequence belongs to the GatB/GatE family. GatB subfamily. In terms of assembly, heterotrimer of A, B and C subunits.

The catalysed reaction is L-glutamyl-tRNA(Gln) + L-glutamine + ATP + H2O = L-glutaminyl-tRNA(Gln) + L-glutamate + ADP + phosphate + H(+). The enzyme catalyses L-aspartyl-tRNA(Asn) + L-glutamine + ATP + H2O = L-asparaginyl-tRNA(Asn) + L-glutamate + ADP + phosphate + 2 H(+). Its function is as follows. Allows the formation of correctly charged Asn-tRNA(Asn) or Gln-tRNA(Gln) through the transamidation of misacylated Asp-tRNA(Asn) or Glu-tRNA(Gln) in organisms which lack either or both of asparaginyl-tRNA or glutaminyl-tRNA synthetases. The reaction takes place in the presence of glutamine and ATP through an activated phospho-Asp-tRNA(Asn) or phospho-Glu-tRNA(Gln). The sequence is that of Aspartyl/glutamyl-tRNA(Asn/Gln) amidotransferase subunit B from Lactobacillus acidophilus (strain ATCC 700396 / NCK56 / N2 / NCFM).